The following is a 378-amino-acid chain: Erythronate-4-phosphate dehydrogenase (378 aa).

Substrate-binding residues include Ser-45 and Thr-66. Asp-146 and Thr-175 together coordinate NAD(+). Arg-208 is an active-site residue. Asp-232 is an NAD(+) binding site. Residue Glu-237 is part of the active site. The active-site Proton donor is His-254. Gly-257 lines the NAD(+) pocket. Tyr-258 provides a ligand contact to substrate.

The protein belongs to the D-isomer specific 2-hydroxyacid dehydrogenase family. PdxB subfamily. Homodimer.

The protein localises to the cytoplasm. The catalysed reaction is 4-phospho-D-erythronate + NAD(+) = (R)-3-hydroxy-2-oxo-4-phosphooxybutanoate + NADH + H(+). It functions in the pathway cofactor biosynthesis; pyridoxine 5'-phosphate biosynthesis; pyridoxine 5'-phosphate from D-erythrose 4-phosphate: step 2/5. Functionally, catalyzes the oxidation of erythronate-4-phosphate to 3-hydroxy-2-oxo-4-phosphonooxybutanoate. This is Erythronate-4-phosphate dehydrogenase from Escherichia coli (strain 55989 / EAEC).